The chain runs to 354 residues: Thiamine thiazole synthase (354 aa).

Residues Ala-83, 104-105 (EA), Gly-112, and Val-177 each bind substrate. The residue at position 210 (Cys-210) is a 2,3-didehydroalanine (Cys). Substrate is bound by residues Asp-212, His-227, Met-305, and 315 to 317 (RMR).

Belongs to the THI4 family. As to quaternary structure, homooctamer. Fe cation serves as cofactor. Post-translationally, during the catalytic reaction, a sulfide is transferred from Cys-210 to a reaction intermediate, generating a dehydroalanine residue.

The protein resides in the cytoplasm. The protein localises to the nucleus. The enzyme catalyses [ADP-thiazole synthase]-L-cysteine + glycine + NAD(+) = [ADP-thiazole synthase]-dehydroalanine + ADP-5-ethyl-4-methylthiazole-2-carboxylate + nicotinamide + 3 H2O + 2 H(+). Involved in biosynthesis of the thiamine precursor thiazole. Catalyzes the conversion of NAD and glycine to adenosine diphosphate 5-(2-hydroxyethyl)-4-methylthiazole-2-carboxylic acid (ADT), an adenylated thiazole intermediate. The reaction includes an iron-dependent sulfide transfer from a conserved cysteine residue of the protein to a thiazole intermediate. The enzyme can only undergo a single turnover, which suggests it is a suicide enzyme. May have additional roles in adaptation to various stress conditions and in DNA damage tolerance. The sequence is that of Thiamine thiazole synthase from Candida albicans (strain WO-1) (Yeast).